A 592-amino-acid chain; its full sequence is 3-hydroxy-3-methylglutaryl-coenzyme A reductase 1 (592 aa).

Residues 1 to 45 (MDLRRRPPKPPVTNNNNSNGSFRSYQPRTSDDDHRRRATTIAPPP) are disordered. Over residues 12–28 (VTNNNNSNGSFRSYQPR) the composition is skewed to polar residues. 2 N-linked (GlcNAc...) asparagine glycosylation sites follow: Asn-16 and Asn-19. 2 consecutive transmembrane segments (helical) span residues 47–69 (ASDA…FFSV) and 97–117 (AIIA…IDFV). The linker stretch occupies residues 118-171 (QSFISRASGDAWDLADTIDDDDHRLVTCSPPTPIVSVAKLPNPEPIVTESLPEE). A catalytic region spans residues 172 to 592 (DEEIVKSVID…GATTTTTTTT (421 aa)). Glu-265 (charge relay system) is an active-site residue. N-linked (GlcNAc...) asparagine glycosylation is present at Asn-329. Active-site charge relay system residues include Lys-397 and Asp-473. The active-site Proton donor is the His-571. An N-linked (GlcNAc...) asparagine glycan is attached at Asn-575. A Phosphoserine modification is found at Ser-577.

This sequence belongs to the HMG-CoA reductase family. In terms of assembly, interacts (via N-terminus) with B''ALPHA and B''BETA. Inactivated by phosphorylation at Ser-577 by KIN10 activated form. Probably also phosphorylated at additional sites. As to expression, found in all tissues. Isoform Short is expressed at low levels specifically in flowers. Expressed in both the tapetum and microspores.

The protein localises to the endoplasmic reticulum membrane. It carries out the reaction (R)-mevalonate + 2 NADP(+) + CoA = (3S)-3-hydroxy-3-methylglutaryl-CoA + 2 NADPH + 2 H(+). The protein operates within metabolic intermediate biosynthesis; (R)-mevalonate biosynthesis; (R)-mevalonate from acetyl-CoA: step 3/3. Its activity is regulated as follows. Regulated at the post-translational level in response to alterations of sphingolipid and sterol biosynthetic pathways. Negatively regulated by a PP2A-dependent dephosphorylation occurring at a site different than Ser-577. Completely inhibited by mevinolin (IC(50) = 12.5 nM). Reversibly inactivated by phosphorylation at Ser-577 by spinach or Brassica oleracea HMGR kinases in a cell-free system. Down-regulated by KIN10 through its phosphorylation at Ser-577. Its function is as follows. Catalyzes the synthesis of mevalonate, the specific precursor of all isoprenoid compounds present in plants. This chain is 3-hydroxy-3-methylglutaryl-coenzyme A reductase 1, found in Arabidopsis thaliana (Mouse-ear cress).